We begin with the raw amino-acid sequence, 854 residues long: Protein translocase subunit SecA (854 aa).

ATP is bound by residues Gln81, 99–103, and Asp487; that span reads GEGKT.

Belongs to the SecA family. In terms of assembly, monomer and homodimer. Part of the essential Sec protein translocation apparatus which comprises SecA, SecYEG and auxiliary proteins SecDF. Other proteins may also be involved.

It is found in the cell membrane. The protein localises to the cytoplasm. The catalysed reaction is ATP + H2O + cellular proteinSide 1 = ADP + phosphate + cellular proteinSide 2.. Part of the Sec protein translocase complex. Interacts with the SecYEG preprotein conducting channel. Has a central role in coupling the hydrolysis of ATP to the transfer of proteins into and across the cell membrane, serving as an ATP-driven molecular motor driving the stepwise translocation of polypeptide chains across the membrane. The polypeptide is Protein translocase subunit SecA (Mycoplasma mobile (strain ATCC 43663 / 163K / NCTC 11711) (Mesomycoplasma mobile)).